Here is a 700-residue protein sequence, read N- to C-terminus: ATP-dependent zinc metalloprotease FtsH (700 aa).

Over 1 to 20 (MSSDNGSGRQGGDRGGSTGY) the chain is Cytoplasmic. Residues 21–41 (NLLMYLGFGAIIATLVALYVL) traverse the membrane as a helical segment. The Periplasmic segment spans residues 42–171 (QMFQTSLDYT…FRHADPPGPW (130 aa)). Residues 172-192 (EQHSQLIIGMLLAAMLIYIVV) traverse the membrane as a helical segment. Residues 193–700 (RRLSAAGSPM…ITAPATERSG (508 aa)) are Cytoplasmic-facing. 262–269 (GPPGTGKT) is a binding site for ATP. Histidine 484 contacts Zn(2+). Glutamate 485 is an active-site residue. The Zn(2+) site is built by histidine 488 and aspartate 561.

It in the central section; belongs to the AAA ATPase family. This sequence in the C-terminal section; belongs to the peptidase M41 family. As to quaternary structure, homohexamer. The cofactor is Zn(2+).

The protein resides in the cell inner membrane. Acts as a processive, ATP-dependent zinc metallopeptidase for both cytoplasmic and membrane proteins. Plays a role in the quality control of integral membrane proteins. The sequence is that of ATP-dependent zinc metalloprotease FtsH from Pirellula staleyi (strain ATCC 27377 / DSM 6068 / ICPB 4128) (Pirella staleyi).